A 535-amino-acid polypeptide reads, in one-letter code: Arylsulfatase K (535 aa).

An N-terminal signal peptide occupies residues 1 to 21 (MGSGGPLLLLRGLLLVGAAYC). Ca(2+) is bound by residues Asp41 and Cys81. Residue Cys81 is the Nucleophile of the active site. Position 81 is a 3-oxoalanine (Cys) (Cys81). Lys129 provides a ligand contact to substrate. Asn194 is a glycosylation site (N-linked (GlcNAc...) asparagine). Residue His252 participates in substrate binding. Asn263 carries an N-linked (GlcNAc...) asparagine glycan. Positions 314 and 315 each coordinate Ca(2+). Residues Asn376, Asn414, and Asn499 are each glycosylated (N-linked (GlcNAc...) asparagine).

It belongs to the sulfatase family. Ca(2+) is required as a cofactor. In terms of processing, the conversion to 3-oxoalanine (also known as C-formylglycine, FGly), of a serine or cysteine residue in prokaryotes and of a cysteine residue in eukaryotes, is critical for catalytic activity.

It localises to the secreted. Its subcellular location is the lysosome. It carries out the reaction an aryl sulfate + H2O = a phenol + sulfate + H(+). The catalysed reaction is Hydrolysis of the 2-sulfate groups of the 2-O-sulfo-D-glucuronate residues of chondroitin sulfate, heparin and heparitin sulfate.. Catalyzes the hydrolysis of pseudosubstrates such as p-nitrocatechol sulfate and p-nitrophenyl sulfate. Catalyzes the hydrolysis of the 2-sulfate groups of the 2-O-sulfo-D-glucuronate residues of chondroitin sulfate, heparin and heparitin sulfate. Acts selectively on 2-sulfoglucuronate and lacks activity against 2-sulfoiduronate. The sequence is that of Arylsulfatase K (ARSK) from Gallus gallus (Chicken).